A 237-amino-acid chain; its full sequence is Uridylate kinase (237 aa).

Residue 9–12 (KLSG) participates in ATP binding. UMP is bound at residue Gly-51. 2 residues coordinate ATP: Gly-52 and Arg-56. Residues Asp-71 and 132-139 (CGNPFFTT) each bind UMP. Thr-159, Tyr-165, and Asp-168 together coordinate ATP.

The protein belongs to the UMP kinase family. As to quaternary structure, homohexamer.

Its subcellular location is the cytoplasm. The enzyme catalyses UMP + ATP = UDP + ADP. It participates in pyrimidine metabolism; CTP biosynthesis via de novo pathway; UDP from UMP (UMPK route): step 1/1. With respect to regulation, inhibited by UTP. In terms of biological role, catalyzes the reversible phosphorylation of UMP to UDP. The chain is Uridylate kinase from Prochlorococcus marinus (strain NATL1A).